The primary structure comprises 746 residues: Root phototropism protein 3 (746 aa).

Positions 1–24 are disordered; the sequence is MMWESESDGGVGVGGGGGREYGDG. Over residues 9-19 the composition is skewed to gly residues; sequence GGVGVGGGGGR. Residues 54-122 form the BTB domain; that stretch reads SDLLVKIGDM…CYGVPVDLTA (69 aa). The region spanning 250-605 is the NPH3 domain; it reads DWWFEDVSIL…VQVLFSEQVK (356 aa). The disordered stretch occupies residues 461 to 500; the sequence is EQTEGSSPSRMSPSPSQSMYADIPRGNNNNGGGGGGNNQN. A compositionally biased stretch (low complexity) spans 466-478; that stretch reads SSPSRMSPSPSQS. At Y546 the chain carries Phosphotyrosine. Residues 708 to 746 form a disordered region; it reads SKLTKMSGQESHDISSGGEQAGVDHPPPRKPRRWRNSIS. A compositionally biased stretch (basic residues) spans 735–746; that stretch reads PRKPRRWRNSIS.

Belongs to the NPH3 family. As to quaternary structure, interacts with PKS1, PKS2, RPT2, PHOT1 and PHOT2. Subunit of a complex made of CAR6, PHOT1 and RPT3/NPH3. Post-translationally, phosphorylated in the dark. Expressed in hypocotyls, guard cells and mesophyll cells.

The protein resides in the cell membrane. It participates in protein modification; protein ubiquitination. Its function is as follows. May act as a substrate-specific adapter of an E3 ubiquitin-protein ligase complex (CUL3-RBX1-BTB) which mediates the ubiquitination and subsequent proteasomal degradation of target proteins. Signal transducer of the phototropic response and photo-induced movements. Involved in the phot1 pathway under low blue light (LBL) fluence rate and in the phot2 pathway under higher fluence rate of blue light (HBL). Necessary for root and hypocotyl phototropisms, but not for the regulation of stomata opening. Not involved in chloroplast accumulation and translocation. This Arabidopsis thaliana (Mouse-ear cress) protein is Root phototropism protein 3 (RPT3).